The sequence spans 325 residues: Elongation factor P--(R)-beta-lysine ligase (325 aa).

Position 76-78 (76-78 (SPE)) interacts with substrate. Residues 100-102 (RNE) and N109 each bind ATP. Residue Y118 participates in substrate binding. Residue 244–245 (EL) participates in ATP binding. E251 contributes to the substrate binding site. An ATP-binding site is contributed by G300.

Belongs to the class-II aminoacyl-tRNA synthetase family. EpmA subfamily. Homodimer.

The enzyme catalyses D-beta-lysine + L-lysyl-[protein] + ATP = N(6)-((3R)-3,6-diaminohexanoyl)-L-lysyl-[protein] + AMP + diphosphate + H(+). Functionally, with EpmB is involved in the beta-lysylation step of the post-translational modification of translation elongation factor P (EF-P). Catalyzes the ATP-dependent activation of (R)-beta-lysine produced by EpmB, forming a lysyl-adenylate, from which the beta-lysyl moiety is then transferred to the epsilon-amino group of a conserved specific lysine residue in EF-P. The sequence is that of Elongation factor P--(R)-beta-lysine ligase from Pectobacterium atrosepticum (strain SCRI 1043 / ATCC BAA-672) (Erwinia carotovora subsp. atroseptica).